Reading from the N-terminus, the 121-residue chain is uncharacterized protein (121 aa).

Residues 101–121 (TVVKKEDVRESPVDTFMENAT) are disordered. Positions 102-112 (VVKKEDVRESP) are enriched in basic and acidic residues.

This is an uncharacterized protein from Schizosaccharomyces pombe (strain 972 / ATCC 24843) (Fission yeast).